Consider the following 61-residue polypeptide: MSKHLRITLVKSLIGVAEKHRRVVAGLGLRHTHHSVERLDTPEIRGMVNKVPYLLRWEELS.

Belongs to the universal ribosomal protein uL30 family. As to quaternary structure, part of the 50S ribosomal subunit.

This chain is Large ribosomal subunit protein uL30, found in Acidithiobacillus ferrooxidans (strain ATCC 23270 / DSM 14882 / CIP 104768 / NCIMB 8455) (Ferrobacillus ferrooxidans (strain ATCC 23270)).